A 941-amino-acid chain; its full sequence is Pre-mRNA-processing factor 6 (941 aa).

Positions 1 to 79 (MNKKKKPFLG…DEDLNDTNYD (79 aa)) are disordered. Residues 39–65 (DANDPVDDRHAPPGKRTVGDQMKKNQA) show a composition bias toward basic and acidic residues. Acidic residues predominate over residues 66–78 (ADDDDEDLNDTNY). A Phosphoserine modification is found at S143. A phosphothreonine mark is found at T180, T266, and T275. Position 279 is a phosphoserine (S279). HAT repeat units lie at residues 384-416 (TDIR…LEEP), 418-444 (DARI…ARLE), 445-476 (TYEN…LEEA), 554-586 (NALE…FEKN), 588-620 (GTRE…SKWL), 622-654 (GDVP…LESE), 689-721 (GNIS…IEEQ), 723-755 (ELME…LEEK), and 855-887 (RKIT…FELQ).

In terms of assembly, identified in the spliceosome B complex. Identified in the spliceosome C complex. Associates with the U5 snRNP particle. Component of the U4/U6-U5 tri-snRNP complex composed of the U4, U6 and U5 snRNAs and at least PRPF3, PRPF4, PRPF6, PRPF8, PRPF31, SNRNP200, TXNL4A, SNRNP40, DDX23, CD2BP2, PPIH, SNU13, EFTUD2, SART1 and USP39, LSm proteins LSm2-8 and Sm proteins. Interacts with ARAF1. Interacts with AR and NR3C1, but not ESR1, independently of the presence of hormones. Interacts with USH1G. Phosphorylated by PRP4K during spliceosome assembly.

It is found in the nucleus. The protein resides in the nucleoplasm. It localises to the nucleus speckle. Functionally, involved in pre-mRNA splicing as component of the U4/U6-U5 tri-snRNP complex, one of the building blocks of the spliceosome. Enhances dihydrotestosterone-induced transactivation activity of AR, as well as dexamethasone-induced transactivation activity of NR3C1, but does not affect estrogen-induced transactivation. The protein is Pre-mRNA-processing factor 6 (Prpf6) of Mus musculus (Mouse).